Here is a 447-residue protein sequence, read N- to C-terminus: Tubulin beta-2 chain (447 aa).

GTP contacts are provided by Gln11, Glu69, Ser138, Gly142, Thr143, Gly144, Asn204, and Asn226. A Mg(2+)-binding site is contributed by Glu69. Residues 419-447 are disordered; sequence VSEYQQYQDATADDEGEYEDEEEEADLQD. The segment covering 429–447 has biased composition (acidic residues); sequence TADDEGEYEDEEEEADLQD.

Belongs to the tubulin family. Dimer of alpha and beta chains. A typical microtubule is a hollow water-filled tube with an outer diameter of 25 nm and an inner diameter of 15 nM. Alpha-beta heterodimers associate head-to-tail to form protofilaments running lengthwise along the microtubule wall with the beta-tubulin subunit facing the microtubule plus end conferring a structural polarity. Microtubules usually have 13 protofilaments but different protofilament numbers can be found in some organisms and specialized cells. Mg(2+) is required as a cofactor. As to expression, expressed in leaf sheaths and suspension cultured cells.

The protein localises to the cytoplasm. It is found in the cytoskeleton. Its function is as follows. Tubulin is the major constituent of microtubules, a cylinder consisting of laterally associated linear protofilaments composed of alpha- and beta-tubulin heterodimers. Microtubules grow by the addition of GTP-tubulin dimers to the microtubule end, where a stabilizing cap forms. Below the cap, tubulin dimers are in GDP-bound state, owing to GTPase activity of alpha-tubulin. The sequence is that of Tubulin beta-2 chain (TUBB2) from Oryza sativa subsp. japonica (Rice).